A 565-amino-acid chain; its full sequence is Translation machinery-associated protein 64 (565 aa).

One can recognise a PUA domain in the interval 89-170 (LPIVLTHGFV…VAVKIIHHFN (82 aa)). In terms of domain architecture, SWIB/MDM2 spans 362 to 447 (TLYKPFNLAK…GEILHPLLTN (86 aa)). The SUI1 domain occupies 475–547 (IKIITEMKIG…SIIDHLNKLG (73 aa)).

Belongs to the eIF2D family. As to quaternary structure, interacts with the 40S ribosomal subunit.

This is Translation machinery-associated protein 64 (TMA64) from Saccharomyces cerevisiae (strain ATCC 204508 / S288c) (Baker's yeast).